Here is a 117-residue protein sequence, read N- to C-terminus: Large ribosomal subunit protein bL19 (117 aa).

The protein belongs to the bacterial ribosomal protein bL19 family.

Its function is as follows. This protein is located at the 30S-50S ribosomal subunit interface and may play a role in the structure and function of the aminoacyl-tRNA binding site. This is Large ribosomal subunit protein bL19 from Colwellia psychrerythraea (strain 34H / ATCC BAA-681) (Vibrio psychroerythus).